The chain runs to 122 residues: Acidic phospholipase A2 (122 aa).

7 cysteine pairs are disulfide-bonded: cysteine 26/cysteine 115, cysteine 28/cysteine 44, cysteine 43/cysteine 95, cysteine 49/cysteine 122, cysteine 50/cysteine 88, cysteine 57/cysteine 81, and cysteine 75/cysteine 86. The Ca(2+) site is built by tyrosine 27, glycine 29, and glycine 31. Histidine 47 is an active-site residue. Aspartate 48 is a Ca(2+) binding site. Aspartate 89 is an active-site residue.

This sequence belongs to the phospholipase A2 family. Group II subfamily. D49 sub-subfamily. As to quaternary structure, monomer. Ca(2+) is required as a cofactor. In terms of tissue distribution, expressed by the venom gland.

It localises to the secreted. It carries out the reaction a 1,2-diacyl-sn-glycero-3-phosphocholine + H2O = a 1-acyl-sn-glycero-3-phosphocholine + a fatty acid + H(+). Functionally, PLA2 catalyzes the calcium-dependent hydrolysis of the 2-acyl groups in 3-sn-phosphoglycerides. The polypeptide is Acidic phospholipase A2 (Gloydius blomhoffii (Mamushi)).